We begin with the raw amino-acid sequence, 260 residues long: Mantle protein (260 aa).

Positions 1-16 are cleaved as a signal peptide; the sequence is MLAVLLFAALVATAYS.

As to expression, prismatic layer of shell (at protein level). Expressed primarily in the mantle with highest level in the mantle edge and lower level in the mantle pallium.

It is found in the secreted. The polypeptide is Mantle protein (Pinctada maxima (Silver-lipped pearl oyster)).